Here is a 1068-residue protein sequence, read N- to C-terminus: Carbamoyl phosphate synthase large chain (1068 aa).

Residues Met1–Glu401 form a carboxyphosphate synthetic domain region. Positions 129, 169, 175, 176, 208, 210, 215, 241, 242, 243, 284, and 298 each coordinate ATP. One can recognise an ATP-grasp 1 domain in the interval Arg133 to Leu327. Residues Gln284, Glu298, and Asn300 each contribute to the Mg(2+) site. 3 residues coordinate Mn(2+): Gln284, Glu298, and Asn300. The tract at residues Ile402–Val549 is oligomerization domain. Residues Glu550 to Asn932 are carbamoyl phosphate synthetic domain. An ATP-grasp 2 domain is found at Asp674 to Leu864. Residues Arg710, Lys749, Leu751, Glu755, Gly780, Val781, His782, Ser783, Gln823, and Glu835 each coordinate ATP. Residues Gln823, Glu835, and Asn837 each coordinate Mg(2+). Mn(2+)-binding residues include Gln823, Glu835, and Asn837. The MGS-like domain maps to Met933 to Asn1068. Residues Met933–Asn1068 are allosteric domain.

This sequence belongs to the CarB family. As to quaternary structure, composed of two chains; the small (or glutamine) chain promotes the hydrolysis of glutamine to ammonia, which is used by the large (or ammonia) chain to synthesize carbamoyl phosphate. Tetramer of heterodimers (alpha,beta)4. Requires Mg(2+) as cofactor. Mn(2+) serves as cofactor.

It catalyses the reaction hydrogencarbonate + L-glutamine + 2 ATP + H2O = carbamoyl phosphate + L-glutamate + 2 ADP + phosphate + 2 H(+). The catalysed reaction is hydrogencarbonate + NH4(+) + 2 ATP = carbamoyl phosphate + 2 ADP + phosphate + 2 H(+). Its pathway is amino-acid biosynthesis; L-arginine biosynthesis; carbamoyl phosphate from bicarbonate: step 1/1. The protein operates within pyrimidine metabolism; UMP biosynthesis via de novo pathway; (S)-dihydroorotate from bicarbonate: step 1/3. Large subunit of the glutamine-dependent carbamoyl phosphate synthetase (CPSase). CPSase catalyzes the formation of carbamoyl phosphate from the ammonia moiety of glutamine, carbonate, and phosphate donated by ATP, constituting the first step of 2 biosynthetic pathways, one leading to arginine and/or urea and the other to pyrimidine nucleotides. The large subunit (synthetase) binds the substrates ammonia (free or transferred from glutamine from the small subunit), hydrogencarbonate and ATP and carries out an ATP-coupled ligase reaction, activating hydrogencarbonate by forming carboxy phosphate which reacts with ammonia to form carbamoyl phosphate. The sequence is that of Carbamoyl phosphate synthase large chain from Clostridium botulinum (strain Kyoto / Type A2).